Here is a 324-residue protein sequence, read N- to C-terminus: Glyoxylate/hydroxypyruvate reductase B (324 aa).

Catalysis depends on residues Arg-237 and Glu-266. The active-site Proton donor is the His-285.

The protein belongs to the D-isomer specific 2-hydroxyacid dehydrogenase family. GhrB subfamily. Homodimer.

The protein localises to the cytoplasm. The enzyme catalyses glycolate + NADP(+) = glyoxylate + NADPH + H(+). It carries out the reaction (R)-glycerate + NAD(+) = 3-hydroxypyruvate + NADH + H(+). It catalyses the reaction (R)-glycerate + NADP(+) = 3-hydroxypyruvate + NADPH + H(+). Its function is as follows. Catalyzes the NADPH-dependent reduction of glyoxylate and hydroxypyruvate into glycolate and glycerate, respectively. This chain is Glyoxylate/hydroxypyruvate reductase B, found in Enterobacter sp. (strain 638).